A 175-amino-acid chain; its full sequence is Alpha-crystallin B chain (175 aa).

N-acetylmethionine is present on M1. The residue at position 19 (S19) is a Phosphoserine. Residue S41 is glycosylated (O-linked (GlcNAc) serine). Phosphoserine is present on residues S45 and S59. In terms of domain architecture, sHSP spans 56 to 164 (RAPSWIDTGL…PERTIPITRE (109 aa)). H83 serves as a coordination point for Zn(2+). K92 bears the N6-acetyllysine mark. 4 residues coordinate Zn(2+): H104, E106, H111, and H119. The disordered stretch occupies residues 139–175 (SDGVLTMNGPRKQASGPERTIPITREEKPAVTAAPKK). Residue K166 is modified to N6-acetyllysine. O-linked (GlcNAc) threonine glycosylation occurs at T170.

This sequence belongs to the small heat shock protein (HSP20) family. As to quaternary structure, heteromer composed of three CRYAA and one CRYAB subunits. Aggregates with homologous proteins, including the small heat shock protein HSPB1, to form large heteromeric complexes. Inter-subunit bridging via zinc ions enhances stability, which is crucial as there is no protein turn over in the lens. Interacts with HSPBAP1 and TTN/titin. Interacts with TMEM109; in the cellular response to DNA damage. Interacts with DES; binds rapidly during early stages of DES filament assembly and a reduced binding seen in the later stages. Interacts with ATP6V1A and with MTOR, forming a ternary complex.

It localises to the cytoplasm. The protein localises to the nucleus. The protein resides in the secreted. It is found in the lysosome. Its function is as follows. May contribute to the transparency and refractive index of the lens. Has chaperone-like activity, preventing aggregation of various proteins under a wide range of stress conditions. In lens epithelial cells, stabilizes the ATP6V1A protein, preventing its degradation by the proteasome. In Ovis aries (Sheep), this protein is Alpha-crystallin B chain (CRYAB).